A 120-amino-acid polypeptide reads, in one-letter code: Chaperonin GroEL (120 aa).

23–27 (DGTTT) serves as a coordination point for ATP.

This sequence belongs to the chaperonin (HSP60) family. Forms a cylinder of 14 subunits composed of two heptameric rings stacked back-to-back. Interacts with the co-chaperonin GroES.

The protein resides in the cytoplasm. The catalysed reaction is ATP + H2O + a folded polypeptide = ADP + phosphate + an unfolded polypeptide.. Functionally, together with its co-chaperonin GroES, plays an essential role in assisting protein folding. The GroEL-GroES system forms a nano-cage that allows encapsulation of the non-native substrate proteins and provides a physical environment optimized to promote and accelerate protein folding. This Mycobacterium malmoense protein is Chaperonin GroEL.